A 481-amino-acid polypeptide reads, in one-letter code: Aspartyl/glutamyl-tRNA(Asn/Gln) amidotransferase subunit B (481 aa).

The protein belongs to the GatB/GatE family. GatB subfamily. In terms of assembly, heterotrimer of A, B and C subunits.

The enzyme catalyses L-glutamyl-tRNA(Gln) + L-glutamine + ATP + H2O = L-glutaminyl-tRNA(Gln) + L-glutamate + ADP + phosphate + H(+). It catalyses the reaction L-aspartyl-tRNA(Asn) + L-glutamine + ATP + H2O = L-asparaginyl-tRNA(Asn) + L-glutamate + ADP + phosphate + 2 H(+). Functionally, allows the formation of correctly charged Asn-tRNA(Asn) or Gln-tRNA(Gln) through the transamidation of misacylated Asp-tRNA(Asn) or Glu-tRNA(Gln) in organisms which lack either or both of asparaginyl-tRNA or glutaminyl-tRNA synthetases. The reaction takes place in the presence of glutamine and ATP through an activated phospho-Asp-tRNA(Asn) or phospho-Glu-tRNA(Gln). The polypeptide is Aspartyl/glutamyl-tRNA(Asn/Gln) amidotransferase subunit B (Teredinibacter turnerae (strain ATCC 39867 / T7901)).